Here is a 128-residue protein sequence, read N- to C-terminus: Small ribosomal subunit protein uS11 (128 aa).

It belongs to the universal ribosomal protein uS11 family. Part of the 30S ribosomal subunit. Interacts with proteins S7 and S18. Binds to IF-3.

In terms of biological role, located on the platform of the 30S subunit, it bridges several disparate RNA helices of the 16S rRNA. Forms part of the Shine-Dalgarno cleft in the 70S ribosome. The polypeptide is Small ribosomal subunit protein uS11 (Aster yellows witches'-broom phytoplasma (strain AYWB)).